A 438-amino-acid chain; its full sequence is MKIVYDRINNMRGNLITITAEGVSLGELARIDLKDGRNIYASVLRIDGDQVTLQVFQTTRGISTSDQVTFLNRQMQAVYGDTLLGRRLSGTGLPIDGGPQVIGESIDIGSTSFNPVKRIVPRDMVRTNIPMIDVFNCLVKSQKIPIFSVPGEPYNALLMRIANQTDADVVIIGGMGLTFKEYQAFIENAETAGTINKTVMFIHRATDPAVECLLVPDMALACAERFATDGKNVLVLLTDMTAFADAIKEIAITMDQVPSNRGYPGSLYSDLASRYEKAVSIEDSGSITVIGVTTMPGDDVTHPVPDNTGYITEGQFYLHHGKIDPFGSLSRLKQLVIGKVTRDDHGDLANAMIRLYAESKKARERQAMGFKLSKWDEKLLTYSHLFEERMMNLEVNYTLEEALDLGWETLAECFLASEVGIKESVISKYWPEIAQISK.

The protein belongs to the ATPase alpha/beta chains family.

In terms of biological role, produces ATP from ADP in the presence of a proton gradient across the membrane. The V-type beta chain is a regulatory subunit. This is V-type ATP synthase beta chain from Protochlamydia amoebophila (strain UWE25).